The chain runs to 359 residues: Very-long-chain (3R)-3-hydroxyacyl-CoA dehydratase (359 aa).

Residues 1–144 lie on the Cytoplasmic side of the membrane; sequence MSALTPHVYW…RKDPFLGLKK (144 aa). Residues 3–92 enclose the CS domain; that stretch reads ALTPHVYWAQ…QEEVWWNRLT (90 aa). Residues 109 to 133 are a coiled coil; it reads LDESDAEMELREKEEKINKVSFESR. The chain crosses the membrane as a helical span at residues 145-165; the sequence is GFLFMYNLVQFLGYSWIFVNM. At 166–186 the chain is on the lumenal side; that stretch reads TVRLFILGQDSFYDTFHTIAD. Residues 187–207 traverse the membrane as a helical segment; sequence VMYFCQMLAIMEVINPAVGLV. Residues 208 to 209 lie on the Cytoplasmic side of the membrane; the sequence is KT. A helical membrane pass occupies residues 210–230; it reads GVMPAFIQVMGRNFILFVIFG. Residues 231-239 are Lumenal-facing; it reads SLEDMQNKP. The helical transmembrane segment at 240-260 threads the bilayer; the sequence is VVFFVFYLWSTIEIFRYPFYM. Topologically, residues 261–277 are cytoplasmic; the sequence is LACIDTEWKLLTWLRYT. A helical transmembrane segment spans residues 278–298; sequence IWMPLYPLGVLAEAVAVIQSI. Residues Y283 and E290 contribute to the active site. Topologically, residues 299 to 317 are lumenal; it reads PIFDETKLLSIPLPKATGL. A helical membrane pass occupies residues 318–338; the sequence is SLSFSYILQLYLVVMFLGLFI. Residues 339-359 lie on the Cytoplasmic side of the membrane; it reads NFRHLFKQRTRRFRTKKRKAN.

Belongs to the very long-chain fatty acids dehydratase HACD family.

Its subcellular location is the endoplasmic reticulum membrane. The catalysed reaction is a very-long-chain (3R)-3-hydroxyacyl-CoA = a very-long-chain (2E)-enoyl-CoA + H2O. It carries out the reaction (3R)-hydroxyhexadecanoyl-CoA = (2E)-hexadecenoyl-CoA + H2O. The protein operates within lipid metabolism; fatty acid biosynthesis. Catalyzes the third of the four reactions of the long-chain fatty acids elongation cycle. This endoplasmic reticulum-bound enzymatic process, allows the addition of two carbons to the chain of long- and very long-chain fatty acids/VLCFAs per cycle. This enzyme catalyzes the dehydration of the 3-hydroxyacyl-CoA intermediate into trans-2,3-enoyl-CoA, within each cycle of fatty acid elongation. Thereby, it participates in the production of VLCFAs of different chain lengths that are involved in multiple biological processes as precursors of membrane lipids and lipid mediators. Involved in Rac1-signaling pathways leading to the modulation of gene expression. This is Very-long-chain (3R)-3-hydroxyacyl-CoA dehydratase from Danio rerio (Zebrafish).